The chain runs to 365 residues: MKSLRLVALFCCLLPLGMAHASRIKDISSVEGVRSNQLIGYGLVVGLPGTGEKSNAFTEQTFRTMLNNFGIKVPDNIKPKIKDVAPVAIHADLPPFAKPGQTIDVTVSAIGEAKSLRGGTLLQSFLKGLDGRVYAVAQGSLVVGGLGAEGADGSKVVINTPTVGRIANGATVEREVPNSFSQGDTITFNLNRPDFTTARRLADVVNDLVGPNTAQALDATSVKVYAPRDPGQRVSYLATIENLEVDPASEAAKIIVNSRTGTIVIGSQVRLKPAAISHGGLTVTIAENQQVSQPNPLSGGQTAVTNNSTINVQQEQGRMFKLDTGATLDDLVRAVNQVGVAPGDLMAILEALQQAGAIEGQLVIL.

A signal peptide spans Met1–Ala21.

It belongs to the FlgI family. In terms of assembly, the basal body constitutes a major portion of the flagellar organelle and consists of four rings (L,P,S, and M) mounted on a central rod.

The protein localises to the periplasm. It is found in the bacterial flagellum basal body. Its function is as follows. Assembles around the rod to form the L-ring and probably protects the motor/basal body from shearing forces during rotation. The chain is Flagellar P-ring protein from Aeromonas hydrophila subsp. hydrophila (strain ATCC 7966 / DSM 30187 / BCRC 13018 / CCUG 14551 / JCM 1027 / KCTC 2358 / NCIMB 9240 / NCTC 8049).